The primary structure comprises 268 residues: Fc receptor-like protein 6 (268 aa).

The signal sequence occupies residues 1–16 (MLLWMVLLLCESMAEA). Residues 17-215 (QELFPNPELT…TAWIKSNMLP (199 aa)) lie on the Extracellular side of the membrane. Positions 114–194 (PVLTLQHEAT…AKNNISREIS (81 aa)) constitute an Ig-like C2-type domain. Residues Cys135 and Cys183 are joined by a disulfide bond. N-linked (GlcNAc...) asparagine glycans are attached at residues Asn180 and Asn188. Residues 216–236 (IWLPASLLGGMVIAAVVLMYF) form a helical membrane-spanning segment. Residues 237 to 268 (FKPCKKHARPETPTLKEPDSFLYVSVDNQRYK) are Cytoplasmic-facing.

As to quaternary structure, interacts with class II MHC.

It localises to the cell membrane. In terms of biological role, acts as a MHC class II receptor. When stimulated on its own, does not play a role in cytokine production or the release of cytotoxic granules by NK cells and cytotoxic CD8(+) T cells. Does not act as an Fc receptor. The polypeptide is Fc receptor-like protein 6 (Fcrl6) (Mus musculus (Mouse)).